The primary structure comprises 201 residues: Recombination protein RecR (201 aa).

The segment at 60 to 75 adopts a C4-type zinc-finger fold; sequence CSCCGNVDTSDPCTIC. A Toprim domain is found at 83-178; it reads ATLIVVEDVS…RVTRLAHGVP (96 aa).

It belongs to the RecR family.

Functionally, may play a role in DNA repair. It seems to be involved in an RecBC-independent recombinational process of DNA repair. It may act with RecF and RecO. The polypeptide is Recombination protein RecR (Brucella ovis (strain ATCC 25840 / 63/290 / NCTC 10512)).